Here is a 219-residue protein sequence, read N- to C-terminus: uncharacterized protein (219 aa).

Residues 30–107 (FRLFVGNLGN…RPVKLSRATS (78 aa)) enclose the RRM domain. The segment covering 140-149 (KKIKNKHGKN) has biased composition (basic residues). The segment at 140-219 (KKIKNKHGKN…YSRASSFRRV (80 aa)) is disordered. Residues 150–169 (SSKSSRAAQSAAAELISSSS) show a composition bias toward low complexity. Positions 176-186 (ANSTSVPNAVN) are enriched in polar residues.

This is an uncharacterized protein from Schizosaccharomyces pombe (strain 972 / ATCC 24843) (Fission yeast).